The primary structure comprises 489 residues: Valine--tRNA ligase (489 aa).

Positions 482 to 486 match the 'KMSKS' region motif; that stretch reads KMSKS. ATP is bound at residue Lys485.

The protein belongs to the class-I aminoacyl-tRNA synthetase family.

It catalyses the reaction tRNA(Val) + L-valine + ATP = L-valyl-tRNA(Val) + AMP + diphosphate. The polypeptide is Valine--tRNA ligase (VALS) (Trichomonas vaginalis).